Reading from the N-terminus, the 73-residue chain is UPF0352 protein APL_0584 (73 aa).

The protein belongs to the UPF0352 family.

The polypeptide is UPF0352 protein APL_0584 (Actinobacillus pleuropneumoniae serotype 5b (strain L20)).